The following is a 1247-amino-acid chain: F-box/WD repeat-containing protein A (1247 aa).

The 214-residue stretch at 1–214 folds into the START domain; the sequence is MQYVNGNDIS…PATVSGRLAK (214 aa). 2 disordered regions span residues 484–514 and 552–576; these read GNKD…DNII and QQPQ…KEIK. Positions 552–566 are enriched in low complexity; it reads QQPQQQQQQPQEQQQ. The 47-residue stretch at 631 to 677 folds into the F-box domain; sequence NSGFDNLPEEVVQIIFSNLSAINIVNLSLVCKRFKMATDSPILWKNL. Disordered regions lie at residues 697–744 and 833–856; these read SNLS…QQQQ and GQES…KRDN. 2 stretches are compositionally biased toward low complexity: residues 707-719 and 726-744; these read NSNS…GSSS and QQQN…QQQQ. The segment covering 833 to 846 has biased composition (polar residues); the sequence is GQESPINKNSSDNP. WD repeat units follow at residues 895–934, 945–984, 988–1025, 1029–1073, 1076–1114, 1119–1158, and 1218–1247; these read GHNR…GDYE, DHTQ…IEVI, RPTN…LLWN, AHTK…CINT, GHSY…TFIS, KHTG…LSNI, and NHES…RWDF.

As to quaternary structure, component of an SCF complex including at least culA. Formation of this complex appears to require activity of the MAP kinase erk2. Interacts with regA.

Functionally, substrate recognition component of a SCF (SKP1-CUL1-F-box protein) E3 ubiquitin-protein ligase complex which mediates the ubiquitination and subsequent proteasomal degradation of target proteins. May target the cAMP phosphodiesterase regA for degradation leading to an increase in cAMP and PKA activity. Promotes development of prestalk cells as opposed to prespores within the developing fruiting body. Required for culmination and fruiting body development. The sequence is that of F-box/WD repeat-containing protein A (fbxA) from Dictyostelium discoideum (Social amoeba).